A 289-amino-acid polypeptide reads, in one-letter code: Heme oxygenase 1 (289 aa).

Over 1 to 266 (MERPQLDSMS…SQISTSSSQT (266 aa)) the chain is Cytoplasmic. Residues Lys18, His25, Tyr134, and Arg183 each coordinate heme b. Residues 225-261 (HKDQSPSQTEFLRQRPASLVQDTTSAETPRGKSQIST) are disordered. 2 positions are modified to phosphoserine: Ser229 and Ser242. A compositionally biased stretch (polar residues) spans 244-261 (VQDTTSAETPRGKSQIST). Residues 267-289 (PLLRWVLTLSFLLATVAVGIYAM) traverse the membrane as a helical; Anchor for type IV membrane protein segment.

The protein belongs to the heme oxygenase family. As to quaternary structure, homodimer and higher order homooligomer. Oligomerization is crucial for its stability and function in the endoplasmic reticulum. Interacts with FLVCR2; this interaction is potentiated in the presence of heme. A soluble form arises by proteolytic removal of the membrane anchor.

The protein resides in the endoplasmic reticulum membrane. It carries out the reaction heme b + 3 reduced [NADPH--hemoprotein reductase] + 3 O2 = biliverdin IXalpha + CO + Fe(2+) + 3 oxidized [NADPH--hemoprotein reductase] + 3 H2O + H(+). Its activity is regulated as follows. Inhibited by metalloporphyrins such as Sn- and Zn-protoporphyrins. Catalyzes the oxidative cleavage of heme at the alpha-methene bridge carbon, released as carbon monoxide (CO), to generate biliverdin IXalpha, while releasing the central heme iron chelate as ferrous iron. Affords protection against programmed cell death and this cytoprotective effect relies on its ability to catabolize free heme and prevent it from sensitizing cells to undergo apoptosis. Its function is as follows. Catalyzes the oxidative cleavage of heme at the alpha-methene bridge carbon, released as carbon monoxide (CO), to generate biliverdin IXalpha, while releasing the central heme iron chelate as ferrous iron. This is Heme oxygenase 1 (Hmox1) from Rattus norvegicus (Rat).